The sequence spans 96 residues: Mapk-regulated corepressor-interacting protein 1 (96 aa).

2 disordered regions span residues 1-28 (MASS…GSEI) and 76-96 (AFKP…AKKS). The short motif at 79–83 (PVDLS) is the PXDLS motif element. A compositionally biased stretch (basic and acidic residues) spans 81 to 96 (DLSDLKRRNTQDAKKS).

Belongs to the MCRIP family.

It is found in the nucleus. The protein localises to the cytoplasm. The protein resides in the stress granule. Its function is as follows. May play a role in the regulation of the epithelial-mesenchymal transition. The chain is Mapk-regulated corepressor-interacting protein 1 (MCRIP1) from Gallus gallus (Chicken).